The chain runs to 66 residues: ATP synthase subunit c (66 aa).

The next 2 helical transmembrane spans lie at Leu3–Met23 and Phe45–Ile65.

It belongs to the ATPase C chain family. F-type ATPases have 2 components, F(1) - the catalytic core - and F(0) - the membrane proton channel. F(1) has five subunits: alpha(3), beta(3), gamma(1), delta(1), epsilon(1). F(0) has three main subunits: a(1), b(2) and c(10-14). The alpha and beta chains form an alternating ring which encloses part of the gamma chain. F(1) is attached to F(0) by a central stalk formed by the gamma and epsilon chains, while a peripheral stalk is formed by the delta and b chains.

Its subcellular location is the cell membrane. F(1)F(0) ATP synthase produces ATP from ADP in the presence of a proton or sodium gradient. F-type ATPases consist of two structural domains, F(1) containing the extramembraneous catalytic core and F(0) containing the membrane proton channel, linked together by a central stalk and a peripheral stalk. During catalysis, ATP synthesis in the catalytic domain of F(1) is coupled via a rotary mechanism of the central stalk subunits to proton translocation. Its function is as follows. Key component of the F(0) channel; it plays a direct role in translocation across the membrane. A homomeric c-ring of between 10-14 subunits forms the central stalk rotor element with the F(1) delta and epsilon subunits. The protein is ATP synthase subunit c of Streptococcus pneumoniae serotype 19F (strain G54).